The primary structure comprises 446 residues: MSGYEINFDGLVGPTHHYAGLSFGNEASTKNRNHLSNPKLAAKQGLLKMKALADMGMKQGVLAPQERPHVPSLRKLGFGGDDHAVITQAMRTSPELLSALSSASCMWTANAATVSPSADSADGRVHFTAANLNNKFHRSIEHETTSQILAAIFRDERYFAHHLALPPVALFGDEGAANHNRLGGPYDSAAVQVFVYGQQFLGGQVAPKRYPARQSLEACQAVARLHQLDSNRTVFVQQNPDVIDEGVFHNDVIAVSNQQVLFHHQKAFFNQAQALNEIREKMALLEQDLIAIEVPDQRVSVGDAVSTYLFNSQLITRPDGGMTIVVPEESRQNLAVWSYLNDMIQMGTPVDQIKVFDLRESMRNGGGPACLRLRVAVNDAEFNAINHNVLMNDALFARLNTWVDRRYRDQLSHQDLADPALLIESRSALDELTQILNLGSVYHFQQ.

Substrate is bound by residues 19-28 (AGLSFGNEAS), N110, and 137-138 (HR). Residue E174 is part of the active site. R213 contacts substrate. H249 is a catalytic residue. Substrate contacts are provided by D251 and N364. The active-site Nucleophile is C370.

The protein belongs to the succinylarginine dihydrolase family. Homodimer.

The catalysed reaction is N(2)-succinyl-L-arginine + 2 H2O + 2 H(+) = N(2)-succinyl-L-ornithine + 2 NH4(+) + CO2. The protein operates within amino-acid degradation; L-arginine degradation via AST pathway; L-glutamate and succinate from L-arginine: step 2/5. Functionally, catalyzes the hydrolysis of N(2)-succinylarginine into N(2)-succinylornithine, ammonia and CO(2). This chain is N-succinylarginine dihydrolase, found in Acinetobacter baylyi (strain ATCC 33305 / BD413 / ADP1).